The primary structure comprises 970 residues: Unconventional myosin-XIX (970 aa).

The Myosin motor domain maps to 35–758; sequence YKLDDLTRVN…MLELLECGRA (724 aa). 132–139 is an ATP binding site; that stretch reads GESGAGKT. The actin-binding stretch occupies residues 602-624; sequence LEQLLQVLHSTTPHYIRCIKPNS. S685 is subject to Phosphoserine. IQ domains lie at 759–779 and 783–812; these read RVLE…RHRE and QWRA…AATV. Residues 824–970 are myMOMA region; sequence MACLAAKELD…VTSSAFTGLG (147 aa).

It belongs to the TRAFAC class myosin-kinesin ATPase superfamily. Myosin family. As to quaternary structure, myosin is a hexamer of 2 heavy chains and 4 light chains: interacts with myosin light chains MYL9 and MYL12B. In terms of tissue distribution, widely expressed in multiple tissues and cell lines.

The protein localises to the mitochondrion outer membrane. It localises to the cytoplasm. Its subcellular location is the cytoskeleton. Its function is as follows. Actin-based motor molecule with ATPase activity that localizes to the mitochondrion outer membrane. Motor protein that moves towards the plus-end of actin filaments. Required for mitochondrial inheritance during mitosis. May be involved in mitochondrial transport or positioning. The sequence is that of Unconventional myosin-XIX from Homo sapiens (Human).